The chain runs to 853 residues: DNA mismatch repair protein MutS (853 aa).

614–621 (GPNMGGKS) is an ATP binding site.

The protein belongs to the DNA mismatch repair MutS family.

Functionally, this protein is involved in the repair of mismatches in DNA. It is possible that it carries out the mismatch recognition step. This protein has a weak ATPase activity. The chain is DNA mismatch repair protein MutS from Escherichia coli O6:H1 (strain CFT073 / ATCC 700928 / UPEC).